A 321-amino-acid polypeptide reads, in one-letter code: D-alanine--D-alanine ligase (321 aa).

The ATP-grasp domain maps to 121-315; the sequence is RIWFLTNNIN…FTNLIEEIIK (195 aa). 147 to 199 serves as a coordination point for ATP; the sequence is PMKRPYVIKPLTQGSSIGVEVIFAEDDFNFADYDFPYGDQVIIEQYIKGRELQ. The Mg(2+) site is built by E268, E282, and N284.

This sequence belongs to the D-alanine--D-alanine ligase family. The cofactor is Mg(2+). Mn(2+) serves as cofactor.

Its subcellular location is the cytoplasm. It carries out the reaction 2 D-alanine + ATP = D-alanyl-D-alanine + ADP + phosphate + H(+). It participates in cell wall biogenesis; peptidoglycan biosynthesis. Its function is as follows. Cell wall formation. This is D-alanine--D-alanine ligase from Rickettsia rickettsii (strain Iowa).